We begin with the raw amino-acid sequence, 156 residues long: S-ribosylhomocysteine lyase (156 aa).

Fe cation contacts are provided by His54, His58, and Cys126.

The protein belongs to the LuxS family. As to quaternary structure, homodimer. It depends on Fe cation as a cofactor.

It catalyses the reaction S-(5-deoxy-D-ribos-5-yl)-L-homocysteine = (S)-4,5-dihydroxypentane-2,3-dione + L-homocysteine. Functionally, involved in the synthesis of autoinducer 2 (AI-2) which is secreted by bacteria and is used to communicate both the cell density and the metabolic potential of the environment. The regulation of gene expression in response to changes in cell density is called quorum sensing. Catalyzes the transformation of S-ribosylhomocysteine (RHC) to homocysteine (HC) and 4,5-dihydroxy-2,3-pentadione (DPD). The chain is S-ribosylhomocysteine lyase from Shouchella clausii (strain KSM-K16) (Alkalihalobacillus clausii).